The chain runs to 342 residues: Phosphoribosylformylglycinamidine cyclo-ligase (342 aa).

It belongs to the AIR synthase family.

It localises to the cytoplasm. The enzyme catalyses 2-formamido-N(1)-(5-O-phospho-beta-D-ribosyl)acetamidine + ATP = 5-amino-1-(5-phospho-beta-D-ribosyl)imidazole + ADP + phosphate + H(+). The protein operates within purine metabolism; IMP biosynthesis via de novo pathway; 5-amino-1-(5-phospho-D-ribosyl)imidazole from N(2)-formyl-N(1)-(5-phospho-D-ribosyl)glycinamide: step 2/2. This chain is Phosphoribosylformylglycinamidine cyclo-ligase, found in Staphylococcus aureus (strain USA300).